An 874-amino-acid chain; its full sequence is Alanine--tRNA ligase (874 aa).

Zn(2+) contacts are provided by histidine 561, histidine 565, cysteine 663, and histidine 667.

Belongs to the class-II aminoacyl-tRNA synthetase family. Zn(2+) serves as cofactor.

Its subcellular location is the cytoplasm. The catalysed reaction is tRNA(Ala) + L-alanine + ATP = L-alanyl-tRNA(Ala) + AMP + diphosphate. In terms of biological role, catalyzes the attachment of alanine to tRNA(Ala) in a two-step reaction: alanine is first activated by ATP to form Ala-AMP and then transferred to the acceptor end of tRNA(Ala). Also edits incorrectly charged Ser-tRNA(Ala) and Gly-tRNA(Ala) via its editing domain. The chain is Alanine--tRNA ligase from Trichodesmium erythraeum (strain IMS101).